A 229-amino-acid chain; its full sequence is Potassium/proton antiporter CemA (229 aa).

3 consecutive transmembrane segments (helical) span residues 7 to 27 (FTPL…SFSF), 114 to 134 (LICF…LVIL), and 189 to 209 (ILSG…KYWI).

This sequence belongs to the CemA family.

Its subcellular location is the plastid. The protein localises to the chloroplast inner membrane. It catalyses the reaction K(+)(in) + H(+)(out) = K(+)(out) + H(+)(in). Its function is as follows. Contributes to K(+)/H(+) antiport activity by supporting proton efflux to control proton extrusion and homeostasis in chloroplasts in a light-dependent manner to modulate photosynthesis. Prevents excessive induction of non-photochemical quenching (NPQ) under continuous-light conditions. Indirectly promotes efficient inorganic carbon uptake into chloroplasts. This is Potassium/proton antiporter CemA from Ipomoea purpurea (Common morning glory).